Reading from the N-terminus, the 118-residue chain is Small ribosomal subunit protein uS13 (118 aa).

Residues 92–118 (RRGLPVRGQRTKTNARTRKGPRKPIKK) form a disordered region.

The protein belongs to the universal ribosomal protein uS13 family. As to quaternary structure, part of the 30S ribosomal subunit. Forms a loose heterodimer with protein S19. Forms two bridges to the 50S subunit in the 70S ribosome.

Located at the top of the head of the 30S subunit, it contacts several helices of the 16S rRNA. In the 70S ribosome it contacts the 23S rRNA (bridge B1a) and protein L5 of the 50S subunit (bridge B1b), connecting the 2 subunits; these bridges are implicated in subunit movement. Contacts the tRNAs in the A and P-sites. The polypeptide is Small ribosomal subunit protein uS13 (Pectobacterium carotovorum subsp. carotovorum (strain PC1)).